A 234-amino-acid polypeptide reads, in one-letter code: Zein-alpha 19B1 (234 aa).

The first 21 residues, 1–21 (MAAKIFCLLMLLGLSASAATA), serve as a signal peptide directing secretion.

The protein belongs to the zein family.

Zeins are major seed storage proteins. The polypeptide is Zein-alpha 19B1 (Zea mays (Maize)).